Consider the following 263-residue polypeptide: Cell division coordinator CpoB (263 aa).

The first 26 residues, 1-26, serve as a signal peptide directing secretion; that stretch reads MSSNFRHQLLSLSLLVGIAAPWAAFA. Residues 44 to 88 adopt a coiled-coil conformation; it reads QLERISNAHSQLLTQLQQQLSDNQSDIDSLRGQIQENQYQLNQVV. Low complexity predominate over residues 106-123; it reads AAAQSTSGDQSGAAASTT. The interval 106-139 is disordered; it reads AAAQSTSGDQSGAAASTTPTADAGTANAGAPVKS. TPR repeat units lie at residues 143–176, 180–213, and 217–250; these read NTDY…YPDS, PNAN…YPKS, and ADAM…YPGT.

The protein belongs to the CpoB family. In terms of assembly, homotrimer. Interacts directly with the central domain of TolA and with PBP1B. Binding to TolA disrupts the homotrimer to form a YbgF/TolA heterodimer with weak affinity. Forms a quaternary complex with PBP1B-LpoB and TolA.

It localises to the periplasm. Functionally, mediates coordination of peptidoglycan synthesis and outer membrane constriction during cell division. Promotes physical and functional coordination of the PBP1B-LpoB and Tol machines, and regulates PBP1B activity in response to Tol energy state. This chain is Cell division coordinator CpoB, found in Escherichia coli (strain K12).